The chain runs to 1007 residues: Sal-like protein 2 (1007 aa).

The interval 1–33 (MSRRKQRKPQQLISDCEGPSASENGDASEEDHP) is disordered. A C2H2-type 1; atypical zinc finger spans residues 34–56 (QVCAKCCAQFTDPTEFLAHQNAC). 4 disordered regions span residues 59–121 (DPPV…GEES), 137–177 (GGGL…SGHL), 220–243 (PASPSELPGTGTASSTKPLLPLFS), and 286–306 (PFSAGGVGRSHKPTPAPSPAL). The span at 70-80 (ENPNNSSASSE) shows a compositional bias: low complexity. Residues 99–108 (PPDSGSSVPT) are compositionally biased toward polar residues. A compositionally biased stretch (pro residues) spans 151 to 171 (PLPPESTPAPPPPPPPPPPPG). At Ser-243 the chain carries Phosphoserine. 2 C2H2-type zinc fingers span residues 373-395 (HKCRFCAKVFGSDSALQIHLRSH) and 401-423 (YKCNVCGNRFTTRGNLKVHFHRH). Disordered regions lie at residues 520-540 (KNKADENTPPGSEGSAISGVA) and 610-629 (AASGAPTTSAPAPSSSASSG). C2H2-type zinc fingers lie at residues 631–653 (NQCVICLRVLSCPRALRLHYGQH), 659–681 (FKCKVCGRAFSTRGNLRAHFVGH), and 691–713 (NSCPICQKKFTNAVTLQQHVRMH). Positions 714–886 (LGGQIPNGGT…SALTPEGEAT (173 aa)) are disordered. Polar residues predominate over residues 734–744 (ENGSEQSTVSG). Residues 747 to 757 (SFPQQQSQQPS) show a composition bias toward low complexity. Residues 758 to 782 (PEEELSEEEEEEDEEEEEDVTDEDS) show a composition bias toward acidic residues. Residues Ser-797, Ser-802, and Ser-806 each carry the phosphoserine modification. The segment covering 803–812 (EEASGAEEEV) has biased composition (acidic residues). Positions 862 to 871 (GKEEGGKPER) are enriched in basic and acidic residues. Residue Lys-911 forms a Glycyl lysine isopeptide (Lys-Gly) (interchain with G-Cter in ubiquitin) linkage. 2 C2H2-type zinc fingers span residues 911-933 (KACEVCGQAFPSQAALEEHQKTH) and 940-963 (FTCVFCRQGFLERATLKKHMLLAH).

The protein belongs to the sal C2H2-type zinc-finger protein family. In terms of tissue distribution, highest levels in adult brain (in different areas). Lower levels in heart; very low levels in kidney and pancreas. Expressed throughout the retina and lens vesicle as well as the periocular mesenchyme.

Its subcellular location is the nucleus. Probable transcription factor that plays a role in eye development before, during, and after optic fissure closure. This Homo sapiens (Human) protein is Sal-like protein 2 (SALL2).